Reading from the N-terminus, the 290-residue chain is Pre-mRNA-splicing factor cwf20 (290 aa).

Disordered stretches follow at residues 1–61 (MSLV…KSSF) and 114–134 (PNNS…KKST). Residues 114-128 (PNNSVSDLTSTGSSE) show a composition bias toward polar residues.

As to quaternary structure, belongs to the 40S cdc5-associated complex (or cwf complex), a spliceosome sub-complex reminiscent of a late-stage spliceosome composed of the U2, U5 and U6 snRNAs and at least brr2, cdc5, cwf2/prp3, cwf3/syf1, cwf4/syf3, cwf5/ecm2, spp42/cwf6, cwf7/spf27, cwf8, cwf9, cwf10, cwf11, cwf12, prp45/cwf13, cwf14, cwf15, cwf16, cwf17, cwf18, cwf19, cwf20, cwf21, cwf22, cwf23, cwf24, cwf25, cwf26, cyp7/cwf27, cwf28, cwf29/ist3, lea1, msl1, prp5/cwf1, prp10, prp12/sap130, prp17, prp22, sap61, sap62, sap114, sap145, slu7, smb1, smd1, smd3, smf1, smg1 and syf2.

Its subcellular location is the nucleus. Its function is as follows. Involved in mRNA splicing where it associates with cdc5 and the other cwf proteins as part of the spliceosome. The protein is Pre-mRNA-splicing factor cwf20 (cwf20) of Schizosaccharomyces pombe (strain 972 / ATCC 24843) (Fission yeast).